The chain runs to 251 residues: MTEAQRHQILLEMLAQLGFVTVEKVVERLGISPATARRDINKLDESGKLKKVRNGAEAITQQRPRWTPMNLHQAQNHDEKVRIAKAASQLVNPGESVVINCGSTAFLLGQEMCGKPVQIITNYLPLANYLIDQEHDSVIIMGGQYNKSQSITLSPQGSENSLYAGHWMFTSSKGLTAEGLYKTDMLTAMAEQKMLSVVGKLVVLVDSSKIGERAGMLFSRADQIDMLITGKNANPETLQQLEAQGVSILRV.

In terms of domain architecture, HTH deoR-type spans 3-58 (EAQRHQILLEMLAQLGFVTVEKVVERLGISPATARRDINKLDESGKLKKVRNGAEA). Residues 20–39 (VTVEKVVERLGISPATARRD) constitute a DNA-binding region (H-T-H motif).

It localises to the cytoplasm. Its function is as follows. Represses ulaG and the ulaABCDEF operon. This chain is HTH-type transcriptional regulator UlaR, found in Shigella dysenteriae serotype 1 (strain Sd197).